Reading from the N-terminus, the 430-residue chain is MLDPKCLRSDIEQTAKRLAARGFNLDVAAFSSLEEKRKTLQSRTQDLQNERNVRSKSIGKAKAQGEDIAPLLAEVGKLGDELDAAKAELSELLEEINTLTQGIPNLPHESVPEGKDEDDNVEISRWGEPRTFDFEVKDHVDVAEGLNNGLDFATASKLTGSRFVVMRGDIARLNRALAQFMLDTHTQEHGYQEMYVPYLVNADSLYGTGQLPKFGEDLFHTKPATEEGQGLSLIPTAEVPLTNIARDEILDAKTLPVKMTAHTPCFRSEAGSYGRDTRGLIRQHQFDKVELVQLVKPEDSFDALEALTGHAEVILQKLELPYRKVLLCTGDMGFGACKTYDLEVWLPAQNTYREISSCSNMLDFQARRMQARFRNPETNKPELLHTLNGSGLAVGRTLVAILENNQQADGSVTVPKALVPYMAGQEVIKA.

The disordered stretch occupies residues 41-60 (QSRTQDLQNERNVRSKSIGK). 236 to 238 (TAE) contacts L-serine. 267–269 (RSE) provides a ligand contact to ATP. Residue Glu290 participates in L-serine binding. Residue 354–357 (EISS) coordinates ATP. Ser390 lines the L-serine pocket.

The protein belongs to the class-II aminoacyl-tRNA synthetase family. Type-1 seryl-tRNA synthetase subfamily. Homodimer. The tRNA molecule binds across the dimer.

Its subcellular location is the cytoplasm. It catalyses the reaction tRNA(Ser) + L-serine + ATP = L-seryl-tRNA(Ser) + AMP + diphosphate + H(+). The enzyme catalyses tRNA(Sec) + L-serine + ATP = L-seryl-tRNA(Sec) + AMP + diphosphate + H(+). Its pathway is aminoacyl-tRNA biosynthesis; selenocysteinyl-tRNA(Sec) biosynthesis; L-seryl-tRNA(Sec) from L-serine and tRNA(Sec): step 1/1. Functionally, catalyzes the attachment of serine to tRNA(Ser). Is also able to aminoacylate tRNA(Sec) with serine, to form the misacylated tRNA L-seryl-tRNA(Sec), which will be further converted into selenocysteinyl-tRNA(Sec). The sequence is that of Serine--tRNA ligase from Alteromonas mediterranea (strain DSM 17117 / CIP 110805 / LMG 28347 / Deep ecotype).